The chain runs to 279 residues: Protein PHOTOPERIODIC CONTROL OF HYPOCOTYL 1-LIKE (279 aa).

As to quaternary structure, interacts with light-activated phyB. Binds directly to PIF1 and COP1. Post-translationally, ubiquitinated by COP1 in darkness; this leads to proteasomal degradation. In terms of tissue distribution, mainly expressed in cotyledons, hypocotyls, leaves.

Its subcellular location is the nucleus. Its function is as follows. Together with PCH1, regulates growth and development adaptation to the ambient environment by controlling negatively phytochrome B (phyB) dark reversion, a temperature-dependent thermal relaxation process during which phyB reverts from the active to the inactive state. Contributes to red (R) light-triggered photomorphogenesis. Promotes various light responses such as seed germination, hypocotyl gravitropism and chlorophyll biosynthesis, via direct interaction with PIF1 and COP1. Prevents DNA-binding ability of PIF1 to negatively regulate the expressions of its target genes. Facilitates the physical interaction between phyB and PIF1 and the subsequent light-induced degradation of PIF1. The polypeptide is Protein PHOTOPERIODIC CONTROL OF HYPOCOTYL 1-LIKE (Arabidopsis thaliana (Mouse-ear cress)).